The primary structure comprises 265 residues: tRNA (guanine-N(1)-)-methyltransferase (265 aa).

Residues Gly-119 and 139 to 144 each bind S-adenosyl-L-methionine; that span reads VGDYIL.

The protein belongs to the RNA methyltransferase TrmD family. As to quaternary structure, homodimer.

Its subcellular location is the cytoplasm. It carries out the reaction guanosine(37) in tRNA + S-adenosyl-L-methionine = N(1)-methylguanosine(37) in tRNA + S-adenosyl-L-homocysteine + H(+). In terms of biological role, specifically methylates guanosine-37 in various tRNAs. This is tRNA (guanine-N(1)-)-methyltransferase from Pseudoalteromonas atlantica (strain T6c / ATCC BAA-1087).